The following is a 443-amino-acid chain: Acid phosphatase type 7 (443 aa).

An N-terminal signal peptide occupies residues 1 to 23 (MAAAPPPPPPLLLLLLCVCAVFA). N53, N76, and N126 each carry an N-linked (GlcNAc...) asparagine glycan. 3 residues coordinate Fe cation: D140, D169, and Y172. D169 contacts Zn(2+). N204 serves as a coordination point for Zn(2+). N210 carries N-linked (GlcNAc...) asparagine glycosylation. H288 contributes to the Zn(2+) binding site. A glycan (N-linked (GlcNAc...) asparagine) is linked at N313. H338 contacts Zn(2+). H340 lines the Fe cation pocket. 2 N-linked (GlcNAc...) asparagine glycosylation sites follow: N355 and N409.

The protein belongs to the metallophosphoesterase superfamily. Purple acid phosphatase family. The cofactor is Fe cation. Requires Zn(2+) as cofactor.

It localises to the secreted. The enzyme catalyses a phosphate monoester + H2O = an alcohol + phosphate. The chain is Acid phosphatase type 7 from Danio rerio (Zebrafish).